Reading from the N-terminus, the 244-residue chain is Probable transcriptional regulatory protein XF_1906 (244 aa).

This sequence belongs to the TACO1 family.

It localises to the cytoplasm. The sequence is that of Probable transcriptional regulatory protein XF_1906 from Xylella fastidiosa (strain 9a5c).